Consider the following 533-residue polypeptide: MAPTIQTQAQREDGHRPNSHRTLPERSGVVCRVKYCNSLPDIPFDPKFITYPFDQNRFVQYKATSLEKQHKHDLLTEPDLGVTIDLINPDTYRIDPNVLLDPADEKLLEEEIQAPTSSKRSQQHAKVVPWMRKTEYISTEFNRYGISNEKPEVKIGVSVKQQFTEEEIYKDRDSQITAIEKTFEDAQKSISQHYSKPRVTPVEVMPVFPDFKMWINPCAQVIFDSDPAPKDTSGAAALEMMSQAMIRGMMDEEGNQFVAYFLPVEETLKKRKRDQEEEMDYAPDDVYDYKIAREYNWNVKNKASKGYEENYFFIFREGDGVYYNELETRVRLSKRRAKAGVQSGTNALLVVKHRDMNEKELEAQEARKAQLENHEPEEEEEEEMETEEKEAGGSDEEQEKGSSSEKEGSEDERSGSESEREEGDRDEASDKSGSGEDESSEDEARAARDKEEIFGSDADSEDDADSDDEDRGQAQGGSDNDSDSGSNGGGQRSRSHSRSRSASPFPSGSEHSAQEDGSEAAAPDSSEADSDSD.

Residues Met1–Leu23 are disordered. The residue at position 117 (Ser117) is a Phosphoserine. Residues Lys133 and Lys154 each participate in a glycyl lysine isopeptide (Lys-Gly) (interchain with G-Cter in SUMO2) cross-link. Positions Lys352 to Lys400 form a coiled coil. The span at Leu361–His374 shows a compositional bias: basic and acidic residues. A disordered region spans residues Leu361 to Asp533. Residues Glu375 to Gln398 show a composition bias toward acidic residues. 2 stretches are compositionally biased toward basic and acidic residues: residues Glu399–Ser434 and Asp442–Ile453. Ser456 is subject to Phosphoserine. Positions Ala458–Asp470 are enriched in acidic residues. 2 stretches are compositionally biased toward low complexity: residues Gly476–Gly485 and Arg500–Ser509.

Belongs to the PAF1 family. In terms of assembly, component of the PAF1 complex, which consists of CDC73, PAF1, LEO1, CTR9, RTF1 and SKIC8. The PAF1 complex interacts with PHF5A. Interacts with POLR2A, TCEA1, SKIC3, KMT2A/MLL1, SUPT5H, RNF20 and RNF40. Interacts with UBE2E1.

It localises to the nucleus. In terms of biological role, component of the PAF1 complex (PAF1C) which has multiple functions during transcription by RNA polymerase II and is implicated in regulation of development and maintenance of embryonic stem cell pluripotency. PAF1C associates with RNA polymerase II through interaction with POLR2A CTD non-phosphorylated and 'Ser-2'- and 'Ser-5'-phosphorylated forms and is involved in transcriptional elongation, acting both independently and synergistically with TCEA1 and in cooperation with the DSIF complex and HTATSF1. PAF1C is required for transcription of Hox and Wnt target genes. PAF1C is involved in hematopoiesis and stimulates transcriptional activity of KMT2A/MLL1. PAF1C is involved in histone modifications such as ubiquitination of histone H2B and methylation on histone H3 'Lys-4' (H3K4me3). PAF1C recruits the RNF20/40 E3 ubiquitin-protein ligase complex and the E2 enzyme UBE2A or UBE2B to chromatin which mediate monoubiquitination of 'Lys-120' of histone H2B (H2BK120ub1); UB2A/B-mediated H2B ubiquitination is proposed to be coupled to transcription. PAF1C is involved in mRNA 3' end formation probably through association with cleavage and poly(A) factors. Connects PAF1C with the RNF20/40 E3 ubiquitin-protein ligase complex. Involved in polyadenylation of mRNA precursors. The sequence is that of RNA polymerase II-associated factor 1 homolog (PAF1) from Pongo abelii (Sumatran orangutan).